We begin with the raw amino-acid sequence, 397 residues long: Tryptophan synthase beta chain (397 aa).

K91 carries the N6-(pyridoxal phosphate)lysine modification.

It belongs to the TrpB family. As to quaternary structure, tetramer of two alpha and two beta chains. Pyridoxal 5'-phosphate is required as a cofactor.

The catalysed reaction is (1S,2R)-1-C-(indol-3-yl)glycerol 3-phosphate + L-serine = D-glyceraldehyde 3-phosphate + L-tryptophan + H2O. Its pathway is amino-acid biosynthesis; L-tryptophan biosynthesis; L-tryptophan from chorismate: step 5/5. The beta subunit is responsible for the synthesis of L-tryptophan from indole and L-serine. The sequence is that of Tryptophan synthase beta chain from Bacillus cereus (strain AH187).